Here is a 266-residue protein sequence, read N- to C-terminus: Diphthine synthase (266 aa).

S-adenosyl-L-methionine contacts are provided by residues Leu9, Asp85, Ile88, 113–114 (TA), Leu168, Ala210, and His235.

The protein belongs to the diphthine synthase family. As to quaternary structure, homodimer.

It catalyses the reaction 2-[(3S)-amino-3-carboxypropyl]-L-histidyl-[translation elongation factor 2] + 3 S-adenosyl-L-methionine = diphthine-[translation elongation factor 2] + 3 S-adenosyl-L-homocysteine + 3 H(+). It participates in protein modification; peptidyl-diphthamide biosynthesis. S-adenosyl-L-methionine-dependent methyltransferase that catalyzes the trimethylation of the amino group of the modified target histidine residue in translation elongation factor 2 (EF-2), to form an intermediate called diphthine. The three successive methylation reactions represent the second step of diphthamide biosynthesis. The protein is Diphthine synthase of Natronomonas pharaonis (strain ATCC 35678 / DSM 2160 / CIP 103997 / JCM 8858 / NBRC 14720 / NCIMB 2260 / Gabara) (Halobacterium pharaonis).